A 438-amino-acid chain; its full sequence is Protein DJ-1 homolog B (438 aa).

Residues 1-45 (MASSSLCHRYFNKITVTPFFNTKKLHHYSPRRISLRVNRRSFSIS) constitute a chloroplast transit peptide. 2 consecutive PfpI endopeptidase domains span residues 53-220 (KKVL…EQLL) and 258-424 (PQIL…EKFY).

The protein belongs to the peptidase C56 family. In terms of assembly, homodimer.

It is found in the plastid. The protein localises to the chloroplast. Its function is as follows. May be involved in oxidative stress response. The sequence is that of Protein DJ-1 homolog B (DJ1B) from Arabidopsis thaliana (Mouse-ear cress).